The following is a 169-amino-acid chain: Allophycocyanin subunit beta-18 (169 aa).

N72 is modified (N4-methylasparagine). C82 is a (2R,3E)-phycocyanobilin binding site.

The protein belongs to the phycobiliprotein family. Heterodimer of ApcE and this beta chain. In terms of processing, contains one covalently linked bilin chromophore. The chromophore is added by phycocyanobilin lyase CpcUS.

It localises to the cellular thylakoid membrane. Its function is as follows. A variant beta-allophycocyanin (AP) which forms a complex with ApcE, a phycobilisome terminal emitter that influences energy transfer to photosystem II. This Picosynechococcus sp. (strain ATCC 27264 / PCC 7002 / PR-6) (Agmenellum quadruplicatum) protein is Allophycocyanin subunit beta-18 (apcF).